Here is a 345-residue protein sequence, read N- to C-terminus: Heat-inducible transcription repressor HrcA (345 aa).

This sequence belongs to the HrcA family.

In terms of biological role, negative regulator of class I heat shock genes (grpE-dnaK-dnaJ and groELS operons). Prevents heat-shock induction of these operons. In Corynebacterium diphtheriae (strain ATCC 700971 / NCTC 13129 / Biotype gravis), this protein is Heat-inducible transcription repressor HrcA.